A 726-amino-acid polypeptide reads, in one-letter code: Catalase-peroxidase (726 aa).

The disordered stretch occupies residues 1-33 (MSTTDDTHNTLSTGKCPFHQGGHDRSAGAGTAS). Positions 105 to 226 (WHGAGTYRSI…LGATEMGLIY (122 aa)) form a cross-link, tryptophyl-tyrosyl-methioninium (Trp-Tyr) (with M-252). His106 functions as the Proton acceptor in the catalytic mechanism. A cross-link (tryptophyl-tyrosyl-methioninium (Tyr-Met) (with W-105)) is located at residues 226-252 (YVNPEGPDHSGEPLSAAAAIRATFGNM). His267 is a heme b binding site.

It belongs to the peroxidase family. Peroxidase/catalase subfamily. As to quaternary structure, homodimer or homotetramer. Heme b is required as a cofactor. Post-translationally, formation of the three residue Trp-Tyr-Met cross-link is important for the catalase, but not the peroxidase activity of the enzyme.

The enzyme catalyses H2O2 + AH2 = A + 2 H2O. It catalyses the reaction 2 H2O2 = O2 + 2 H2O. Functionally, bifunctional enzyme with both catalase and broad-spectrum peroxidase activity. The chain is Catalase-peroxidase from Salmonella choleraesuis (strain SC-B67).